A 986-amino-acid polypeptide reads, in one-letter code: Resact receptor (986 aa).

The N-terminal stretch at 1-21 is a signal peptide; that stretch reads MATTRLLFLLVVAVMITMVRS. At 22-507 the chain is on the extracellular side; the sequence is ATLHYNPTVI…GELCTNWGLY (486 aa). Asparagine 185, asparagine 361, and asparagine 410 each carry an N-linked (GlcNAc...) asparagine glycan. A helical membrane pass occupies residues 508 to 528; it reads LGTLIPAFIIIFGGGLGYYIY. Residues 529-986 lie on the Cytoplasmic side of the membrane; the sequence is RKRAYEAALD…SHSCSALHSS (458 aa). The Protein kinase domain occupies 568–836; sequence LSAISVISNA…PNIIEVRTML (269 aa).

The protein resides in the membrane. It carries out the reaction GTP = 3',5'-cyclic GMP + diphosphate. Implicated as a cell-surface receptor on spermatozoa for 'resact' a chemotactic peptide, and on various other cells as a receptor for atrial natriuretic peptide. In Arbacia punctulata (Punctuate sea urchin), this protein is Resact receptor.